We begin with the raw amino-acid sequence, 290 residues long: Pyridoxal kinase PdxY (290 aa).

Substrate-binding positions include Ser-12 and Thr-47 to Gln-48. ATP contacts are provided by residues Asp-114, Glu-151, Lys-184, and Arg-211–Leu-214. Asp-225 is a binding site for substrate.

It belongs to the pyridoxine kinase family. PdxY subfamily. Homodimer. Mg(2+) is required as a cofactor.

It catalyses the reaction pyridoxal + ATP = pyridoxal 5'-phosphate + ADP + H(+). Its pathway is cofactor metabolism; pyridoxal 5'-phosphate salvage; pyridoxal 5'-phosphate from pyridoxal: step 1/1. Its function is as follows. Pyridoxal kinase involved in the salvage pathway of pyridoxal 5'-phosphate (PLP). Catalyzes the phosphorylation of pyridoxal to PLP. This is Pyridoxal kinase PdxY from Pseudomonas putida (strain ATCC 700007 / DSM 6899 / JCM 31910 / BCRC 17059 / LMG 24140 / F1).